Here is a 115-residue protein sequence, read N- to C-terminus: Large ribosomal subunit protein bL19 (115 aa).

The protein belongs to the bacterial ribosomal protein bL19 family.

This protein is located at the 30S-50S ribosomal subunit interface and may play a role in the structure and function of the aminoacyl-tRNA binding site. This Buchnera aphidicola subsp. Acyrthosiphon pisum (strain APS) (Acyrthosiphon pisum symbiotic bacterium) protein is Large ribosomal subunit protein bL19 (rplS).